The sequence spans 485 residues: UDP-N-acetylmuramate--L-alanine ligase (485 aa).

125-131 serves as a coordination point for ATP; the sequence is GTHGKTT.

It belongs to the MurCDEF family.

It is found in the cytoplasm. The enzyme catalyses UDP-N-acetyl-alpha-D-muramate + L-alanine + ATP = UDP-N-acetyl-alpha-D-muramoyl-L-alanine + ADP + phosphate + H(+). It participates in cell wall biogenesis; peptidoglycan biosynthesis. Cell wall formation. This Stutzerimonas stutzeri (strain A1501) (Pseudomonas stutzeri) protein is UDP-N-acetylmuramate--L-alanine ligase.